We begin with the raw amino-acid sequence, 110 residues long: Large ribosomal subunit protein uL22 (110 aa).

This sequence belongs to the universal ribosomal protein uL22 family. Part of the 50S ribosomal subunit.

Its function is as follows. This protein binds specifically to 23S rRNA; its binding is stimulated by other ribosomal proteins, e.g. L4, L17, and L20. It is important during the early stages of 50S assembly. It makes multiple contacts with different domains of the 23S rRNA in the assembled 50S subunit and ribosome. In terms of biological role, the globular domain of the protein is located near the polypeptide exit tunnel on the outside of the subunit, while an extended beta-hairpin is found that lines the wall of the exit tunnel in the center of the 70S ribosome. The chain is Large ribosomal subunit protein uL22 from Alkaliphilus oremlandii (strain OhILAs) (Clostridium oremlandii (strain OhILAs)).